Here is a 430-residue protein sequence, read N- to C-terminus: Serine hydroxymethyltransferase 2 (430 aa).

Residues leucine 128 and 132 to 134 (GHL) contribute to the (6S)-5,6,7,8-tetrahydrofolate site. The residue at position 237 (lysine 237) is an N6-(pyridoxal phosphate)lysine.

The protein belongs to the SHMT family. As to quaternary structure, homodimer. It depends on pyridoxal 5'-phosphate as a cofactor.

It localises to the cytoplasm. It catalyses the reaction (6R)-5,10-methylene-5,6,7,8-tetrahydrofolate + glycine + H2O = (6S)-5,6,7,8-tetrahydrofolate + L-serine. Its pathway is one-carbon metabolism; tetrahydrofolate interconversion. It functions in the pathway amino-acid biosynthesis; glycine biosynthesis; glycine from L-serine: step 1/1. In terms of biological role, catalyzes the reversible interconversion of serine and glycine with tetrahydrofolate (THF) serving as the one-carbon carrier. This reaction serves as the major source of one-carbon groups required for the biosynthesis of purines, thymidylate, methionine, and other important biomolecules. Also exhibits THF-independent aldolase activity toward beta-hydroxyamino acids, producing glycine and aldehydes, via a retro-aldol mechanism. In Rhodospirillum rubrum (strain ATCC 11170 / ATH 1.1.1 / DSM 467 / LMG 4362 / NCIMB 8255 / S1), this protein is Serine hydroxymethyltransferase 2.